The primary structure comprises 390 residues: Phosphopentomutase (390 aa).

Mn(2+) contacts are provided by Asp11, Asp283, His288, Asp324, His325, and His336.

The protein belongs to the phosphopentomutase family. It depends on Mn(2+) as a cofactor.

The protein resides in the cytoplasm. It catalyses the reaction 2-deoxy-alpha-D-ribose 1-phosphate = 2-deoxy-D-ribose 5-phosphate. The catalysed reaction is alpha-D-ribose 1-phosphate = D-ribose 5-phosphate. It participates in carbohydrate degradation; 2-deoxy-D-ribose 1-phosphate degradation; D-glyceraldehyde 3-phosphate and acetaldehyde from 2-deoxy-alpha-D-ribose 1-phosphate: step 1/2. Its function is as follows. Isomerase that catalyzes the conversion of deoxy-ribose 1-phosphate (dRib-1-P) and ribose 1-phosphate (Rib-1-P) to deoxy-ribose 5-phosphate (dRib-5-P) and ribose 5-phosphate (Rib-5-P), respectively. This is Phosphopentomutase from Clostridium novyi (strain NT).